A 205-amino-acid polypeptide reads, in one-letter code: Cytochrome c oxidase subunit 2 (205 aa).

6 residues coordinate Cu cation: histidine 115, cysteine 150, glutamate 152, cysteine 154, histidine 158, and methionine 161. Glutamate 152 contacts Mg(2+).

Belongs to the cytochrome c oxidase subunit 2 family. In terms of assembly, component of the cytochrome c oxidase (complex IV, CIV), a multisubunit enzyme composed of a catalytic core of 3 subunits and several supernumerary subunits. The complex exists as a monomer or a dimer and forms supercomplexes (SCs) in the inner mitochondrial membrane with ubiquinol-cytochrome c oxidoreductase (cytochrome b-c1 complex, complex III, CIII). It depends on Cu cation as a cofactor.

It is found in the mitochondrion inner membrane. The enzyme catalyses 4 Fe(II)-[cytochrome c] + O2 + 8 H(+)(in) = 4 Fe(III)-[cytochrome c] + 2 H2O + 4 H(+)(out). Component of the cytochrome c oxidase, the last enzyme in the mitochondrial electron transport chain which drives oxidative phosphorylation. The respiratory chain contains 3 multisubunit complexes succinate dehydrogenase (complex II, CII), ubiquinol-cytochrome c oxidoreductase (cytochrome b-c1 complex, complex III, CIII) and cytochrome c oxidase (complex IV, CIV), that cooperate to transfer electrons derived from NADH and succinate to molecular oxygen, creating an electrochemical gradient over the inner membrane that drives transmembrane transport and the ATP synthase. Cytochrome c oxidase is the component of the respiratory chain that catalyzes the reduction of oxygen to water. Electrons originating from reduced cytochrome c in the intermembrane space (IMS) are transferred via the dinuclear copper A center (CU(A)) of subunit 2 and heme A of subunit 1 to the active site in subunit 1, a binuclear center (BNC) formed by heme A3 and copper B (CU(B)). The BNC reduces molecular oxygen to 2 water molecules using 4 electrons from cytochrome c in the IMS and 4 protons from the mitochondrial matrix. The polypeptide is Cytochrome c oxidase subunit 2 (COII) (Paramecium tetraurelia).